Reading from the N-terminus, the 91-residue chain is Soluble cytochrome b558 (91 aa).

One can recognise a Cytochrome b5 heme-binding domain in the interval 8–88 (LPVFTLEQVA…LQRYLIGTLE (81 aa)). A disulfide bridge connects residues cysteine 25 and cysteine 54. The heme site is built by histidine 43 and histidine 71.

This Ectothiorhodospira shaposhnikovii (Ectothiorhodospira vacuolata) protein is Soluble cytochrome b558.